The sequence spans 307 residues: UDP-N-acetylenolpyruvoylglucosamine reductase (307 aa).

The region spanning 33–197 is the FAD-binding PCMH-type domain; it reads TGGNADFYIT…LEAAFTLAPG (165 aa). Residue Arg-176 is part of the active site. Ser-226 (proton donor) is an active-site residue. Residue Glu-296 is part of the active site.

This sequence belongs to the MurB family. FAD is required as a cofactor.

The protein localises to the cytoplasm. It catalyses the reaction UDP-N-acetyl-alpha-D-muramate + NADP(+) = UDP-N-acetyl-3-O-(1-carboxyvinyl)-alpha-D-glucosamine + NADPH + H(+). Its pathway is cell wall biogenesis; peptidoglycan biosynthesis. In terms of biological role, cell wall formation. The polypeptide is UDP-N-acetylenolpyruvoylglucosamine reductase (Staphylococcus aureus (strain NCTC 8325 / PS 47)).